The chain runs to 520 residues: Gamma aminobutyrate transaminase 3, chloroplastic (520 aa).

The N-terminal 44 residues, 1–44 (MAKITSLIGSGIVAATNQVGPHVKHIPAVGNLQKQIVSDQIQVR), are a transit peptide targeting the chloroplast. 172-173 (GS) is a pyridoxal 5'-phosphate binding site. Tyr-205 lines the substrate pocket. Asp-312 serves as a coordination point for pyridoxal 5'-phosphate. Residue Lys-341 coordinates substrate. An N6-(pyridoxal phosphate)lysine modification is found at Lys-341.

This sequence belongs to the class-III pyridoxal-phosphate-dependent aminotransferase family. Expressed in leaves, roots, stems, flowers and fruits.

It is found in the plastid. The protein localises to the chloroplast. It carries out the reaction 4-aminobutanoate + pyruvate = succinate semialdehyde + L-alanine. The catalysed reaction is 4-aminobutanoate + glyoxylate = succinate semialdehyde + glycine. Functionally, transaminase that degrades gamma-amino butyric acid (GABA) and uses pyruvate or glyoxylate as amino-group acceptor. Cannot use beta-alanine, ornithine, acetylornithine, serine, glycine, asparagine, glutamine, glutamate, valine, leucine, isoleucine, methionine, phenylalanine, histidine, lysine, arginine, aspartate, threonine, tyrosine, tryptophan, proline, or cysteine as amino donors. The protein is Gamma aminobutyrate transaminase 3, chloroplastic (GABA-TP3) of Solanum lycopersicum (Tomato).